Consider the following 158-residue polypeptide: Cyclic pyranopterin monophosphate synthase (158 aa).

Residues L76–H78 and M114–E115 contribute to the substrate site. D129 is a catalytic residue.

This sequence belongs to the MoaC family. As to quaternary structure, homohexamer; trimer of dimers.

It carries out the reaction (8S)-3',8-cyclo-7,8-dihydroguanosine 5'-triphosphate = cyclic pyranopterin phosphate + diphosphate. Its pathway is cofactor biosynthesis; molybdopterin biosynthesis. In terms of biological role, catalyzes the conversion of (8S)-3',8-cyclo-7,8-dihydroguanosine 5'-triphosphate to cyclic pyranopterin monophosphate (cPMP). This chain is Cyclic pyranopterin monophosphate synthase, found in Shewanella baltica (strain OS223).